Here is a 1357-residue protein sequence, read N- to C-terminus: Protein CFT1 (1357 aa).

The tract at residues 445–465 (TREAHNPSSGTNSLMDINDDD) is disordered. Residues 450–459 (NPSSGTNSLM) show a composition bias toward polar residues.

Belongs to the CFT1 family. Component of the cleavage and polyadenylation factor (CPF) complex, which is composed of at least PTI1, SYC1, SSU72, GLC7, MPE1, REF2, PFS2, PTA1, YSH1/BRR5, SWD2, CFT2/YDH1, YTH1, CFT1/YHH1, FIP1 and PAP1. Interacts with the phosphorylated CTD domain of RPB1/RNA polymerase II.

The protein localises to the nucleus. In terms of biological role, RNA-binding component of the cleavage and polyadenylation factor (CPF) complex, which plays a key role in polyadenylation-dependent pre-mRNA 3'-end formation and cooperates with cleavage factors including the CFIA complex and NAB4/CFIB. Involved in poly(A) site recognition. May be involved in coupling transcription termination and mRNA 3'-end formation. This Saccharomyces cerevisiae (strain ATCC 204508 / S288c) (Baker's yeast) protein is Protein CFT1 (CFT1).